Here is a 187-residue protein sequence, read N- to C-terminus: Frataxin, mitochondrial (187 aa).

Belongs to the frataxin family. As to quaternary structure, monomer. Oligomer. Interacts with NIFS1.

It is found in the mitochondrion. The catalysed reaction is 4 Fe(2+) + O2 + 4 H(+) = 4 Fe(3+) + 2 H2O. Its function is as follows. Promotes the biosynthesis of heme as well as the assembly and repair of iron-sulfur clusters by delivering Fe(2+) to proteins involved in these pathways. May play a role in the protection against iron-catalyzed oxidative stress through its ability to catalyze the oxidation of Fe(2+) to Fe(3+). May be able to store large amounts of the metal in the form of a ferrihydrite mineral by oligomerization. Binds to the mitochondrial cysteine desulfurase NIFS1 and increases its activity. In Arabidopsis thaliana (Mouse-ear cress), this protein is Frataxin, mitochondrial (FH).